We begin with the raw amino-acid sequence, 597 residues long: Hydrogenase-1 large chain (597 aa).

Positions 76, 79, 576, and 579 each coordinate Ni(2+).

This sequence belongs to the [NiFe]/[NiFeSe] hydrogenase large subunit family. As to quaternary structure, heterodimer of a large and a small subunit. Requires Ni(2+) as cofactor.

It localises to the cell membrane. It catalyses the reaction H2 + A = AH2. This is Hydrogenase-1 large chain (hyaB) from Citrobacter freundii.